We begin with the raw amino-acid sequence, 140 residues long: Ribosome-binding factor A (140 aa).

A disordered region spans residues glutamate 115–glycine 140. Positions serine 128 to glycine 140 are enriched in polar residues.

Belongs to the RbfA family. Monomer. Binds 30S ribosomal subunits, but not 50S ribosomal subunits or 70S ribosomes.

The protein resides in the cytoplasm. One of several proteins that assist in the late maturation steps of the functional core of the 30S ribosomal subunit. Associates with free 30S ribosomal subunits (but not with 30S subunits that are part of 70S ribosomes or polysomes). Required for efficient processing of 16S rRNA. May interact with the 5'-terminal helix region of 16S rRNA. In Synechococcus sp. (strain CC9605), this protein is Ribosome-binding factor A.